Here is a 363-residue protein sequence, read N- to C-terminus: S-methylmethionine--homocysteine S-methyltransferase BHMT2 (363 aa).

The Hcy-binding domain occupies 11 to 305 (KGILERLDSG…YHIRAIAEEL (295 aa)). Residues cysteine 208, cysteine 290, and cysteine 291 each contribute to the Zn(2+) site. Phosphoserine is present on serine 321.

Homotetramer. Zn(2+) serves as cofactor. As to expression, expressed in fetal heart, lung, liver, kidney and eye.

It carries out the reaction S-methyl-L-methionine + L-homocysteine = 2 L-methionine + H(+). It participates in amino-acid biosynthesis; L-methionine biosynthesis via de novo pathway; L-methionine from L-homocysteine (BhmT route): step 1/1. Functionally, involved in the regulation of homocysteine metabolism. Converts homocysteine to methionine using S-methylmethionine (SMM) as a methyl donor. The chain is S-methylmethionine--homocysteine S-methyltransferase BHMT2 (Bhmt2) from Mus musculus (Mouse).